We begin with the raw amino-acid sequence, 374 residues long: DNA replication and repair protein RecF (374 aa).

Position 34–41 (34–41 (GDNGAGKT)) interacts with ATP.

Belongs to the RecF family.

Its subcellular location is the cytoplasm. Its function is as follows. The RecF protein is involved in DNA metabolism; it is required for DNA replication and normal SOS inducibility. RecF binds preferentially to single-stranded, linear DNA. It also seems to bind ATP. The chain is DNA replication and repair protein RecF from Rhizobium johnstonii (strain DSM 114642 / LMG 32736 / 3841) (Rhizobium leguminosarum bv. viciae).